The primary structure comprises 73 residues: U-scoloptoxin(03)-Ssd1b (73 aa).

Positions M1–S23 are cleaved as a signal peptide.

Post-translationally, contains 3 disulfide bonds. In terms of tissue distribution, expressed by the venom gland.

It localises to the secreted. In Scolopendra dehaani (Thai centipede), this protein is U-scoloptoxin(03)-Ssd1b.